The following is a 361-amino-acid chain: Mitochondrial import receptor subunit TOM40 homolog (361 aa).

The segment covering 1–10 has biased composition (low complexity); the sequence is MGNVLAASSP. Positions 1–71 are disordered; it reads MGNVLAASSP…TASASGAAED (71 aa). Positions 11–36 are enriched in pro residues; it reads PAGPPPPPAPALVGLPPPPPSPPGFT. 2 stretches are compositionally biased toward low complexity: residues 37–52 and 59–71; these read LPPL…STSR and GAAT…AAED.

Belongs to the Tom40 family. As to quaternary structure, forms part of the preprotein translocase complex of the outer mitochondrial membrane (TOM complex) which consists of at least 7 different proteins (TOMM5, TOMM6, TOMM7, TOMM20, TOMM22, TOMM40 and TOMM70). Interacts with mitochondrial targeting sequences. Interacts with TIMM29; linking the TIM22 complex to the TOM complex. Forms a complex with BCAP31 (via C-terminus) which mediates the translocation of components of the mitochondrial membrane respiratory chain NADH dehydrogenase (Complex I) from the cytosol to the mitochondria. Interacts (via N-terminus) with CYP1A1 (via mitochondrial targeting signal); this interaction is required for CYP1A1 translocation across the mitochondrial outer membrane.

It is found in the mitochondrion outer membrane. Channel-forming protein essential for import of protein precursors into mitochondria. Plays a role in the assembly of the mitochondrial membrane respiratory chain NADH dehydrogenase (Complex I) by forming a complex with BCAP31 and mediating the translocation of Complex I components from the cytosol to the mitochondria. This chain is Mitochondrial import receptor subunit TOM40 homolog (TOMM40), found in Homo sapiens (Human).